The sequence spans 173 residues: Crossover junction endodeoxyribonuclease RuvC (173 aa).

Active-site residues include Asp8, Glu67, and Asp139. Mg(2+)-binding residues include Asp8, Glu67, and Asp139.

This sequence belongs to the RuvC family. In terms of assembly, homodimer which binds Holliday junction (HJ) DNA. The HJ becomes 2-fold symmetrical on binding to RuvC with unstacked arms; it has a different conformation from HJ DNA in complex with RuvA. In the full resolvosome a probable DNA-RuvA(4)-RuvB(12)-RuvC(2) complex forms which resolves the HJ. The cofactor is Mg(2+).

Its subcellular location is the cytoplasm. The enzyme catalyses Endonucleolytic cleavage at a junction such as a reciprocal single-stranded crossover between two homologous DNA duplexes (Holliday junction).. Its function is as follows. The RuvA-RuvB-RuvC complex processes Holliday junction (HJ) DNA during genetic recombination and DNA repair. Endonuclease that resolves HJ intermediates. Cleaves cruciform DNA by making single-stranded nicks across the HJ at symmetrical positions within the homologous arms, yielding a 5'-phosphate and a 3'-hydroxyl group; requires a central core of homology in the junction. The consensus cleavage sequence is 5'-(A/T)TT(C/G)-3'. Cleavage occurs on the 3'-side of the TT dinucleotide at the point of strand exchange. HJ branch migration catalyzed by RuvA-RuvB allows RuvC to scan DNA until it finds its consensus sequence, where it cleaves and resolves the cruciform DNA. This Vibrio campbellii (strain ATCC BAA-1116) protein is Crossover junction endodeoxyribonuclease RuvC.